The sequence spans 353 residues: Photosystem II protein D1 (353 aa).

At Thr-2 the chain carries N-acetylthreonine. Thr-2 is modified (phosphothreonine). Transmembrane regions (helical) follow at residues 29 to 46 (YIGWFGVLMIPTLLTATS), 118 to 133 (HFLLGVACYMGREWEL), and 142 to 156 (WIAVAYSAPVAAATA). A chlorophyll a-binding site is contributed by His-118. Tyr-126 serves as a coordination point for pheophytin a. The [CaMn4O5] cluster site is built by Asp-170 and Glu-189. The helical transmembrane segment at 197–218 (FHMLGVAGVFGGSLFSAMHGSL) threads the bilayer. His-198 contributes to the chlorophyll a binding site. A quinone-binding positions include His-215 and 264–265 (SF). Residue His-215 coordinates Fe cation. A Fe cation-binding site is contributed by His-272. The helical transmembrane segment at 274 to 288 (FLAAWPVVGIWFTAL) threads the bilayer. [CaMn4O5] cluster-binding residues include His-332, Glu-333, Asp-342, and Ala-344. The propeptide occupies 345 to 353 (AVEAPSING).

It belongs to the reaction center PufL/M/PsbA/D family. In terms of assembly, PSII is composed of 1 copy each of membrane proteins PsbA, PsbB, PsbC, PsbD, PsbE, PsbF, PsbH, PsbI, PsbJ, PsbK, PsbL, PsbM, PsbT, PsbX, PsbY, PsbZ, Psb30/Ycf12, at least 3 peripheral proteins of the oxygen-evolving complex and a large number of cofactors. It forms dimeric complexes. It depends on The D1/D2 heterodimer binds P680, chlorophylls that are the primary electron donor of PSII, and subsequent electron acceptors. It shares a non-heme iron and each subunit binds pheophytin, quinone, additional chlorophylls, carotenoids and lipids. D1 provides most of the ligands for the Mn4-Ca-O5 cluster of the oxygen-evolving complex (OEC). There is also a Cl(-1) ion associated with D1 and D2, which is required for oxygen evolution. The PSII complex binds additional chlorophylls, carotenoids and specific lipids. as a cofactor. Post-translationally, tyr-161 forms a radical intermediate that is referred to as redox-active TyrZ, YZ or Y-Z. C-terminally processed by CTPA; processing is essential to allow assembly of the oxygen-evolving complex and thus photosynthetic growth.

The protein localises to the plastid. Its subcellular location is the chloroplast thylakoid membrane. It catalyses the reaction 2 a plastoquinone + 4 hnu + 2 H2O = 2 a plastoquinol + O2. Its function is as follows. This is one of the two reaction center proteins of photosystem II. Functionally, photosystem II (PSII) is a light-driven water:plastoquinone oxidoreductase that uses light energy to abstract electrons from H(2)O, generating O(2) and a proton gradient subsequently used for ATP formation. It consists of a core antenna complex that captures photons, and an electron transfer chain that converts photonic excitation into a charge separation. The D1/D2 (PsbA/PsbD) reaction center heterodimer binds P680, the primary electron donor of PSII as well as several subsequent electron acceptors. This Pisum sativum (Garden pea) protein is Photosystem II protein D1.